The sequence spans 683 residues: Amphiphysin (683 aa).

Coiled coils occupy residues 10 to 83 (AKNV…SLHE) and 144 to 191 (DYDS…QEEL). One can recognise a BAR domain in the interval 24-240 (VLQKLGKADE…MTKLGDQHAD (217 aa)). 3 disordered regions span residues 244–311 (SIQG…KVTP), 421–443 (AETE…AAAP), and 455–599 (EPKE…ASLS). Ser-252 is modified (phosphoserine). Thr-260 bears the Phosphothreonine mark. The segment covering 261 to 274 (PSPPEEASPLPSPT) has biased composition (pro residues). Phosphoserine is present on residues Ser-262, Ser-268, Ser-272, and Ser-276. At Thr-280 the chain carries Phosphothreonine. Composition is skewed to low complexity over residues 424–443 (EQAL…AAAP) and 468–477 (AGETVGTEGS). Ser-496 carries the phosphoserine modification. Residues 539–559 (SNHEGEEHQETTTGTETREAT) show a composition bias toward basic and acidic residues. Residues 585–596 (AATPAPAGAVDA) show a composition bias toward low complexity. Residues 610–683 (GFLYKVETLH…FPENFTRHLE (74 aa)) enclose the SH3 domain. Position 626 is a phosphoserine (Ser-626).

In terms of assembly, heterodimer with BIN1. Binds SH3GLB1. Interacts with REPS1 and SGIP1. Binds AP2A2. Interacts with AP2B1. Interacts with DNM1 and SYNJ1.

It localises to the cytoplasmic vesicle. The protein localises to the secretory vesicle. It is found in the synaptic vesicle membrane. Its subcellular location is the cytoplasm. The protein resides in the cytoskeleton. May participate in mechanisms of regulated exocytosis in synapses and certain endocrine cell types. May control the properties of the membrane associated cytoskeleton. This Rattus norvegicus (Rat) protein is Amphiphysin (Amph).